We begin with the raw amino-acid sequence, 552 residues long: Urocanate hydratase (552 aa).

NAD(+)-binding positions include 49–50 (GG), Gln127, 173–175 (GMG), Asp193, 239–240 (NA), 260–264 (QTSAH), 270–271 (YI), and Tyr319. Cys407 is a catalytic residue. An NAD(+)-binding site is contributed by Gly489.

Belongs to the urocanase family. Requires NAD(+) as cofactor.

It is found in the cytoplasm. It catalyses the reaction 4-imidazolone-5-propanoate = trans-urocanate + H2O. Its pathway is amino-acid degradation; L-histidine degradation into L-glutamate; N-formimidoyl-L-glutamate from L-histidine: step 2/3. Catalyzes the conversion of urocanate to 4-imidazolone-5-propionate. In Bacillus cereus (strain ATCC 10987 / NRS 248), this protein is Urocanate hydratase.